A 265-amino-acid chain; its full sequence is Short-chain dehydrogenase/reductase phqE (265 aa).

10 residues coordinate NADP(+): threonine 23, serine 24, isoleucine 26, serine 46, asparagine 47, lysine 50, aspartate 76, arginine 131, valine 203, and threonine 205. The helical transmembrane segment at 25–45 (GIGFAVCAAALGHGAIVTIVG) threads the bilayer.

Belongs to the short-chain dehydrogenases/reductases (SDR) family. It depends on NADP(+) as a cofactor.

The protein resides in the membrane. It participates in alkaloid biosynthesis. Its function is as follows. Short-chain dehydrogenase/reductase; part of the gene cluster that mediates the biosynthesis of paraherquamide, a fungal indole alkaloid that belongs to a family of natural products containing a characteristic bicyclo[2.2.2]diazaoctane core. The first steps in the biosynthesis of paraherquamide is the production of the beta-methyl-proline precursor from L-isoleucine. They require oxidation of a terminally hydroxylated L-isoleucine to the corresponding aldehyde by enzymes which have still to be identified. Spontaneous cyclization and dehydration would yield the 4-methyl pyrolline-5-carboxylic acid, which is then reduced by the pyrroline-5-carboxylate reductase phqD leading to the beta-methyl-proline precursor. The next step of paraherquamide biosynthesis involves coupling of beta-methyl-proline and L-tryptophan by the bimodular NRPS phqB, to produce a monooxopiperazine intermediate. The reductase (R) domain of phqB utilizes NADPH for hydride transfer to reduce the thioester bond of the T domain-tethered linear dipeptide to a hemithioaminal intermediate, which spontaneously cleaves the C-S bond to release the aldehyde product. This compound undergoes spontaneous cyclization and dehydration to give a dienamine which is reverse prenylated at C-2 by the reverse prenyltransferase phqJ. The other prenyltransferase present in the cluster, phqI may be a redundant gene in the pathway. During biosynthetic assembly, the key step to produce the polycyclic core is catalyzed by the bifunctional reductase and intramolecular [4+2] Diels-Alderase, phqE, resulting in formation of the [2.2.2] diazaoctane intermediate preparaherquamide. Following formation of preparaherquamide, an indole 2,3-epoxidation-initiated pinacol-like rearrangement is catalyzed by the phqK FAD-dependent monooxygenase. The prenyltransferase phqA, the cytochrome P450 monooxygenase phqL, and the FAD-linked oxidoreductase phqH (or the cytochrome P450 monooxygenase phqM), are proposed to be involved in the formation of the pyran ring. The FAD-dependent monooxygenase phqK is likely responsible for generation of the spiro-oxindole, and the N-methylation is likely mediated by the phqN methyltransferase leading to the isolable natural product paraherquamide F. However, the order of these biosynthetic steps has still to be determined. In late-stage paraherquamide biosynthesis, the third P450 monooxygenase, phqO, is probably responsible for the C-14 hydroxylation, transforming paraherquamide F to paraherquamide G, and paraherquamide E to the final product paraherquamide A. The expansion from the 6-membered ring pyran (in paraherquamides F and G) to the 7-membered dioxepin ring (in paraherquamides A and E) represents a poorly understood but intriguing process that probably involves the 2-oxoglutarate-dependent dioxygenase phqC. Finally, the remaining members of the paraherquamide cluster, including phqI as well as phqM (or phqH), do not have a clearly prescribed role and appear to be redundant. In Penicillium fellutanum, this protein is Short-chain dehydrogenase/reductase phqE.